Consider the following 345-residue polypeptide: Adenine deaminase (345 aa).

Zn(2+)-binding residues include histidine 20, histidine 22, and histidine 204. Residue glutamate 207 is the Proton donor of the active site. Aspartate 285 contacts Zn(2+). Aspartate 286 contributes to the substrate binding site.

It belongs to the metallo-dependent hydrolases superfamily. Adenosine and AMP deaminases family. Adenine deaminase type 2 subfamily. Zn(2+) serves as cofactor.

It catalyses the reaction adenine + H2O + H(+) = hypoxanthine + NH4(+). In terms of biological role, catalyzes the hydrolytic deamination of adenine to hypoxanthine. Plays an important role in the purine salvage pathway and in nitrogen catabolism. This is Adenine deaminase from Ralstonia pickettii (strain 12J).